Consider the following 667-residue polypeptide: tRNA uridine 5-carboxymethylaminomethyl modification enzyme MnmG (667 aa).

13-18 (GGGHAG) contributes to the FAD binding site. 280–294 (GPRYCPSVEDKINRF) contributes to the NAD(+) binding site.

Belongs to the MnmG family. Homodimer. Heterotetramer of two MnmE and two MnmG subunits. FAD is required as a cofactor.

It is found in the cytoplasm. In terms of biological role, NAD-binding protein involved in the addition of a carboxymethylaminomethyl (cmnm) group at the wobble position (U34) of certain tRNAs, forming tRNA-cmnm(5)s(2)U34. In Polaromonas naphthalenivorans (strain CJ2), this protein is tRNA uridine 5-carboxymethylaminomethyl modification enzyme MnmG.